The primary structure comprises 373 residues: MKSGRFIGVMSGTSLDGVDVVLAAIDETMVAQQASLTWPIPVHLKKGILDICQGQPLTLSQLGQLDTQLGRLFAQAVNALLAQQRLQPRDIVAIGCHGQTVWHEPTGEAPHTLQIGDNNHIVAHTGITVVGDFRRRDIALGGQGAPLVPAFHHALLGHPTEKRMVLNIGGIANLSLLFPGQAVRGYDTGPGNMLMDAWIWRQCAQPYDKDAAWAKEGQVILPLLQKMLRDPYFAASAPKSTGREYFNYGWLERHLAAFPGADARDVQATLAELTAVSIAQQVLLNGGCERLMVCGGGGRNPLVMARLAALLTGIEVSTTDKAGISGDDMEALAFAWLAWRTLAGLPGNLPSVTGATEASVLGAIYPANPITQS.

Position 12–19 (12–19 (GTSLDGVD)) interacts with ATP.

This sequence belongs to the anhydro-N-acetylmuramic acid kinase family.

The enzyme catalyses 1,6-anhydro-N-acetyl-beta-muramate + ATP + H2O = N-acetyl-D-muramate 6-phosphate + ADP + H(+). It participates in amino-sugar metabolism; 1,6-anhydro-N-acetylmuramate degradation. It functions in the pathway cell wall biogenesis; peptidoglycan recycling. In terms of biological role, catalyzes the specific phosphorylation of 1,6-anhydro-N-acetylmuramic acid (anhMurNAc) with the simultaneous cleavage of the 1,6-anhydro ring, generating MurNAc-6-P. Is required for the utilization of anhMurNAc either imported from the medium or derived from its own cell wall murein, and thus plays a role in cell wall recycling. In Salmonella paratyphi A (strain ATCC 9150 / SARB42), this protein is Anhydro-N-acetylmuramic acid kinase.